A 297-amino-acid chain; its full sequence is Diaminopimelate epimerase (297 aa).

Positions 13, 46, and 66 each coordinate substrate. The active-site Proton donor is Cys-76. Substrate is bound by residues 77 to 78 (GN), Asn-174, Asn-207, and 225 to 226 (ER). The active-site Proton acceptor is Cys-234. Residue 235–236 (GT) coordinates substrate.

It belongs to the diaminopimelate epimerase family. Homodimer.

Its subcellular location is the cytoplasm. It carries out the reaction (2S,6S)-2,6-diaminopimelate = meso-2,6-diaminopimelate. It participates in amino-acid biosynthesis; L-lysine biosynthesis via DAP pathway; DL-2,6-diaminopimelate from LL-2,6-diaminopimelate: step 1/1. Functionally, catalyzes the stereoinversion of LL-2,6-diaminopimelate (L,L-DAP) to meso-diaminopimelate (meso-DAP), a precursor of L-lysine and an essential component of the bacterial peptidoglycan. In Leptothrix cholodnii (strain ATCC 51168 / LMG 8142 / SP-6) (Leptothrix discophora (strain SP-6)), this protein is Diaminopimelate epimerase.